A 218-amino-acid chain; its full sequence is UPF0502 protein Shewana3_1622 (218 aa).

Belongs to the UPF0502 family.

The protein is UPF0502 protein Shewana3_1622 of Shewanella sp. (strain ANA-3).